Consider the following 430-residue polypeptide: MFVDQVKISLKAGDGGNGITAYRREKYVPFGGPAGGDGGKGASVVFEVDEGLRTLLDFRYQRHFKASKGENGQSSNMHGKNAEDLVLKVPPGTIIKNVETDEVLADLVEDGQRAVVAKGGRGGRGNSRFATPRNPAPDFSEKGEPGEELDVSLELKLLADVGLVGFPSVGKSTLLSIVSKAKPKIGAYHFTTIKPNLGVVSTPDQRSFVMADLPGLIEGASDGVGLGHQFLRHVERTKVIVHMIDMSGSEGREPIEDYKVINQELAAYEQRLEDRPQIVVANKMDLPESQDNLNLFKEEIGEDVPVIPVSTITRDNIDQLLYAIADKLEEYKDVDITVEEEESVGINRVLYKHTPSQDKFTISRDDDGAYVVSGNAIERMFKMTDFNSDPAVRRFARQMRSMGIDDALRERGCKNGDIVRILGGEFEFVE.

Residues methionine 1–leucine 158 form the Obg domain. The tract at residues lysine 118–proline 145 is disordered. The OBG-type G domain occupies alanine 159–glutamate 329. Residues glycine 165–serine 172, phenylalanine 190–lysine 194, aspartate 212–glycine 215, asparagine 282–aspartate 285, and serine 310–isoleucine 312 each bind GTP. The Mg(2+) site is built by serine 172 and threonine 192. The OCT domain maps to lysine 352 to glutamate 430.

It belongs to the TRAFAC class OBG-HflX-like GTPase superfamily. OBG GTPase family. Monomer. Mg(2+) is required as a cofactor.

The protein localises to the cytoplasm. Its function is as follows. An essential GTPase which binds GTP, GDP and possibly (p)ppGpp with moderate affinity, with high nucleotide exchange rates and a fairly low GTP hydrolysis rate. Plays a role in control of the cell cycle, stress response, ribosome biogenesis and in those bacteria that undergo differentiation, in morphogenesis control. The sequence is that of GTPase Obg from Staphylococcus aureus (strain COL).